Reading from the N-terminus, the 216-residue chain is Flavin prenyltransferase UbiX (216 aa).

Residues 9 to 11 (GAS), S35, and R144 each bind FMN. Dimethylallyl phosphate-binding residues include Y174 and R190.

This sequence belongs to the UbiX/PAD1 family.

It catalyses the reaction dimethylallyl phosphate + FMNH2 = prenylated FMNH2 + phosphate. Flavin prenyltransferase that catalyzes the synthesis of the prenylated FMN cofactor (prenyl-FMN) for 4-hydroxy-3-polyprenylbenzoic acid decarboxylase UbiD. The prenyltransferase is metal-independent and links a dimethylallyl moiety from dimethylallyl monophosphate (DMAP) to the flavin N5 and C6 atoms of FMN. The chain is Flavin prenyltransferase UbiX from Streptomyces coelicolor (strain ATCC BAA-471 / A3(2) / M145).